A 433-amino-acid chain; its full sequence is Transcobalamin-1 (433 aa).

A signal peptide spans 1 to 23; that stretch reads MRQSHQLPLVGLLLFSFIPSQLC. Positions 24-310 are globular N-terminal alpha domain; the sequence is EICEVSEENY…DINKDSSCVS (287 aa). 3 cysteine pairs are disulfide-bonded: C26–C265, C105–C308, and C155–C197. 142-146 is a binding site for cyanocob(III)alamin; sequence TNYYQ. A glycan (N-linked (GlcNAc...) asparagine) is linked at N160. D186 provides a ligand contact to cyanocob(III)alamin. N-linked (GlcNAc...) asparagine glycosylation occurs at N216. Residues N240 and Q289 each coordinate cyanocob(III)alamin. The tract at residues 311–332 is flexible linker; that stretch reads ASGNFNISADEPITVTPPDSQS. 6 N-linked (GlcNAc...) asparagine glycosylation sites follow: N316, N337, N343, N349, N354, and N369. A globular C-terminal beta domain region spans residues 333–433; the sequence is YISVNYSVRI…ENLEVRWSKY (101 aa). 385–386 serves as a coordination point for cyanocob(III)alamin; that stretch reads YI. C388 and C393 are joined by a disulfide. Residues 402–404, L411, and Y433 contribute to the cyanocob(III)alamin site; that span reads WEL.

Belongs to the eukaryotic cobalamin transport proteins family. Contains about 30% carbohydrates. In terms of tissue distribution, produced by the salivary glands of the oral cavity, in response to ingestion of food. Major constituent of secondary granules in neutrophils.

The protein localises to the secreted. Functionally, binds vitamin B12 with femtomolar affinity and protects it from the acidic environment of the stomach. The protein is Transcobalamin-1 (TCN1) of Homo sapiens (Human).